The sequence spans 280 residues: ATP synthase gamma chain (280 aa).

The protein belongs to the ATPase gamma chain family. F-type ATPases have 2 components, CF(1) - the catalytic core - and CF(0) - the membrane proton channel. CF(1) has five subunits: alpha(3), beta(3), gamma(1), delta(1), epsilon(1). CF(0) has three main subunits: a, b and c.

It is found in the cell membrane. In terms of biological role, produces ATP from ADP in the presence of a proton gradient across the membrane. The gamma chain is believed to be important in regulating ATPase activity and the flow of protons through the CF(0) complex. The sequence is that of ATP synthase gamma chain from Mycoplasma mycoides subsp. mycoides SC (strain CCUG 32753 / NCTC 10114 / PG1).